We begin with the raw amino-acid sequence, 484 residues long: Regulator of G-protein signaling 9 (484 aa).

The region spanning 30–105 (PDTGVRVQNQ…PDSSLYRFQT (76 aa)) is the DEP domain. Residues 219-280 (VVSVRKEIMY…ITDDTQFWDL (62 aa)) enclose the G protein gamma domain. Residues 299–414 (NFSELIRDPK…LKSPIYKEML (116 aa)) enclose the RGS domain. The interval 460–484 (TTVDITQVMSKLDRRSQLRKEPPPK) is disordered. The segment covering 470–484 (KLDRRSQLRKEPPPK) has biased composition (basic and acidic residues).

In terms of assembly, heterodimer with GNB5. Interacts with RGS7BP, leading to regulate the subcellular location of the heterodimer formed with GNB5. Component of the RGS9-1-Gbeta5 complex composed of RGS9 (RGS9-1), Gbeta5 (GNB5) and RGS9BP. Interacts with PDE6G and GNAT1. Phosphorylation is decreased by light exposition. In terms of tissue distribution, photoreceptor outer segments.

Its subcellular location is the membrane. In terms of biological role, inhibits signal transduction by increasing the GTPase activity of G protein alpha subunits thereby driving them into their inactive GDP-bound form. Binds to GNAT1. Involved in phototransduction; key element in the recovery phase of visual transduction. This Bos taurus (Bovine) protein is Regulator of G-protein signaling 9 (RGS9).